The following is a 655-amino-acid chain: p-hydroxybenzoic acid efflux pump subunit AaeB (655 aa).

The Periplasmic portion of the chain corresponds to 1–12; that stretch reads MGIFSIANQHIR. The helical transmembrane segment at 13–33 threads the bilayer; it reads FAVKLATAIVLALFVGFHFQL. The Cytoplasmic segment spans residues 34-37; it reads ETPR. A helical membrane pass occupies residues 38–58; it reads WAVLTAAIVAAGPAFAAGGEP. The Periplasmic portion of the chain corresponds to 59 to 68; that stretch reads YSGAIRYRGF. The helical transmembrane segment at 69–89 threads the bilayer; that stretch reads LRIIGTFIGCIAGLVIIIAMI. Topologically, residues 90-92 are cytoplasmic; it reads RAP. A helical membrane pass occupies residues 93–113; that stretch reads LLMILVCCIWAGFCTWISSLV. Residues 114-120 are Periplasmic-facing; that stretch reads RIENSYA. The helical transmembrane segment at 121-141 threads the bilayer; it reads WGLAGYTALIIVITIQPEPLL. Topologically, residues 142–151 are cytoplasmic; that stretch reads TPQFAVERCS. Residues 152–172 traverse the membrane as a helical segment; sequence EIVIGIVCAIMADLLFSPRSI. At 173–369 the chain is on the periplasmic side; that stretch reads KQEVDRELES…RTTLSCILGT (197 aa). Residues 370–390 form a helical membrane-spanning segment; the sequence is LFWLWTGWTSGSGAMVMIAVV. The Cytoplasmic portion of the chain corresponds to 391–406; the sequence is TSLAMRLPNPRMVAID. The helical transmembrane segment at 407–427 threads the bilayer; that stretch reads FIYGTLAALPLGLLYFLVIIP. The Periplasmic segment spans residues 428–430; sequence NTQ. The helical transmembrane segment at 431–451 threads the bilayer; the sequence is QSMLLLCISLAVLGFFLGIEV. The Cytoplasmic segment spans residues 452-458; that stretch reads QKRRLGS. Residues 459 to 479 form a helical membrane-spanning segment; it reads MGALASTINIIVLDNPMTFHF. The Periplasmic portion of the chain corresponds to 480–481; the sequence is SQ. A helical membrane pass occupies residues 482–502; that stretch reads FLDSALGQIVGCVLAFTVILL. Over 503–655 the chain is Cytoplasmic; it reads VRDKSRDRTG…HKYQHALTDS (153 aa).

It belongs to the aromatic acid exporter ArAE (TC 2.A.85) family.

It localises to the cell inner membrane. Forms an efflux pump with AaeA. Could function as a metabolic relief valve, allowing to eliminate certain compounds when they accumulate to high levels in the cell. The chain is p-hydroxybenzoic acid efflux pump subunit AaeB from Shigella flexneri.